A 145-amino-acid polypeptide reads, in one-letter code: Class I hydrophobin rodE (145 aa).

Intrachain disulfides connect cysteine 43–cysteine 126, cysteine 59–cysteine 120, cysteine 60–cysteine 95, and cysteine 127–cysteine 140.

This sequence belongs to the fungal hydrophobin family. Self-assembles to form functional amyloid fibrils called rodlets. Self-assembly into fibrillar rodlets occurs spontaneously at hydrophobic:hydrophilic interfaces and the rodlets further associate laterally to form amphipathic monolayers.

Functionally, aerial growth, conidiation, and dispersal of filamentous fungi in the environment rely upon a capability of their secreting small amphipathic proteins called hydrophobins (HPBs) with low sequence identity. Class I can self-assemble into an outermost layer of rodlet bundles on aerial cell surfaces, conferring cellular hydrophobicity that supports fungal growth, development and dispersal; whereas Class II form highly ordered films at water-air interfaces through intermolecular interactions but contribute nothing to the rodlet structure. RodE is a class I hydrophobin that, unlike rodA, is not required for rodlet formation. This Aspergillus fumigatus (strain ATCC MYA-4609 / CBS 101355 / FGSC A1100 / Af293) (Neosartorya fumigata) protein is Class I hydrophobin rodE.